The chain runs to 125 residues: Small ribosomal subunit protein uS12c (125 aa).

This sequence belongs to the universal ribosomal protein uS12 family. In terms of assembly, part of the 30S ribosomal subunit.

Its subcellular location is the plastid. It is found in the chloroplast. Functionally, with S4 and S5 plays an important role in translational accuracy. Located at the interface of the 30S and 50S subunits. The polypeptide is Small ribosomal subunit protein uS12c (rps12) (Nephroselmis olivacea (Green alga)).